The primary structure comprises 569 residues: Beta-lactamase-like protein 4 (569 aa).

Positions 1–19 are cleaved as a signal peptide; sequence MKYYLYLFLLFTFANLLYS. N-linked (GlcNAc...) asparagine glycosylation is found at N87, N172, N239, N240, N250, N299, N343, N412, N419, N436, N468, N509, and N535.

Belongs to the beta-lactamase family.

It localises to the secreted. The chain is Beta-lactamase-like protein 4 from Dictyostelium discoideum (Social amoeba).